Reading from the N-terminus, the 886-residue chain is General transcription factor 3C polypeptide 3 (886 aa).

Residues 1–121 are disordered; sequence MSGFSPELID…TPEQPTAGDV (121 aa). At S2 the chain carries N-acetylserine. Residues 12 to 44 are compositionally biased toward basic and acidic residues; it reads LEGKISFEEFERRREERKTREKKSLQEKGKLSA. S43 is subject to Phosphoserine. The segment covering 53–63 has biased composition (polar residues); it reads VPSSSGINSTK. The segment covering 92–113 has biased composition (acidic residues); it reads ENEDDEEEEEEEEEEEEEEETP. TPR repeat units follow at residues 149 to 182, 183 to 216, 217 to 250, 252 to 284, 290 to 323, 326 to 361, 421 to 454, 456 to 489, 491 to 523, 733 to 766, and 811 to 844; these read LRGL…APLA, YEPF…NPSD, TEEW…EPTN, RYLW…LSPS, MQLA…HQGL, MEDV…EKKT, GDLY…ERYN, AVVW…APLH, DARI…DTLA, HALC…HPDE, and QESF…PPLV. The residue at position 282 (S282) is a Phosphoserine.

As to quaternary structure, part of the TFIIIC subcomplex TFIIIC2, consisting of six subunits, GTF3C1, GTF3C2, GTF3C3, GTF3C4, GTF3C5 and GTF3C6. Interacts with BRF1 and TBP.

Its subcellular location is the nucleus. Involved in RNA polymerase III-mediated transcription. Integral, tightly associated component of the DNA-binding TFIIIC2 subcomplex that directly binds tRNA and virus-associated RNA promoters. The sequence is that of General transcription factor 3C polypeptide 3 (GTF3C3) from Homo sapiens (Human).